Here is a 168-residue protein sequence, read N- to C-terminus: Phosphopantetheine adenylyltransferase (168 aa).

A substrate-binding site is contributed by T9. ATP contacts are provided by residues 9–10 (TF) and H17. 3 residues coordinate substrate: K41, L73, and R87. ATP-binding positions include 88-90 (GLR), E98, and 123-129 (YQFISGT).

It belongs to the bacterial CoaD family. Homohexamer. Requires Mg(2+) as cofactor.

It localises to the cytoplasm. The catalysed reaction is (R)-4'-phosphopantetheine + ATP + H(+) = 3'-dephospho-CoA + diphosphate. Its pathway is cofactor biosynthesis; coenzyme A biosynthesis; CoA from (R)-pantothenate: step 4/5. Its function is as follows. Reversibly transfers an adenylyl group from ATP to 4'-phosphopantetheine, yielding dephospho-CoA (dPCoA) and pyrophosphate. In Paraburkholderia phymatum (strain DSM 17167 / CIP 108236 / LMG 21445 / STM815) (Burkholderia phymatum), this protein is Phosphopantetheine adenylyltransferase.